A 137-amino-acid polypeptide reads, in one-letter code: Transcription antitermination protein NusB (137 aa).

The protein belongs to the NusB family.

In terms of biological role, involved in transcription antitermination. Required for transcription of ribosomal RNA (rRNA) genes. Binds specifically to the boxA antiterminator sequence of the ribosomal RNA (rrn) operons. In Clavibacter michiganensis subsp. michiganensis (strain NCPPB 382), this protein is Transcription antitermination protein NusB.